We begin with the raw amino-acid sequence, 430 residues long: Adenylosuccinate synthetase (430 aa).

GTP contacts are provided by residues 13–19 (GDEGKGK) and 41–43 (GHT). The active-site Proton acceptor is D14. Mg(2+) contacts are provided by D14 and G41. IMP is bound by residues 14–17 (DEGK), 39–42 (NAGH), T130, R144, Q225, T240, and R304. The Proton donor role is filled by H42. 300 to 306 (ASTGRPR) provides a ligand contact to substrate. GTP is bound by residues R306, 332–334 (KLD), and 414–416 (STG).

The protein belongs to the adenylosuccinate synthetase family. In terms of assembly, homodimer. The cofactor is Mg(2+).

The protein resides in the cytoplasm. It carries out the reaction IMP + L-aspartate + GTP = N(6)-(1,2-dicarboxyethyl)-AMP + GDP + phosphate + 2 H(+). It functions in the pathway purine metabolism; AMP biosynthesis via de novo pathway; AMP from IMP: step 1/2. Plays an important role in the de novo pathway of purine nucleotide biosynthesis. Catalyzes the first committed step in the biosynthesis of AMP from IMP. This Stenotrophomonas maltophilia (strain R551-3) protein is Adenylosuccinate synthetase.